Reading from the N-terminus, the 464-residue chain is Gasdermin-A3 (464 aa).

Positions 1 to 261 (MPVFEDVTRA…EEPEEEKLIG (261 aa)) are triggers pyroptosis. 9–13 (RALVR) contacts a cardiolipin. Transmembrane regions (beta stranded) follow at residues 78-95 (NFSF…LVEV), 99-120 (VKVK…TLSV), 164-180 (VTVE…SLPS), and 184-198 (LGLQ…AVTI). A coiled-coil region spans residues 255–327 (EEEKLIGEMH…DKGQKVTLEA (73 aa)).

Belongs to the gasdermin family. Homooligomer; homooligomeric ring-shaped pore complex containing 18-36 subunits when inserted in the membrane. Post-translationally, cleavage relieves autoinhibition by releasing the N-terminal moiety (Gasdermin-A3, N-terminal) that initiates pyroptosis. In contrast to Gsdma, not cleaved by bacterial effector protein SpeB. Palmitoylated. Highest levels in skin with weak expression in placenta and testis. Not detected in the gastrointestinal tract. In skin, expressed in postnatal hair follicles and epidermis as well as sebaceous gland basal cells.

Its subcellular location is the cytoplasm. The protein localises to the cytosol. The protein resides in the cell membrane. It localises to the mitochondrion membrane. With respect to regulation, the full-length protein before cleavage is inactive: intramolecular interactions between N- and C-terminal domains mediate autoinhibition in the absence of activation signal. The intrinsic pyroptosis-inducing activity is carried by the released N-terminal moiety (Gasdermin-A3, N-terminal). Precursor of a pore-forming protein involved in the transition from catagen to telogen at the end of hair follicle morphogenesis. This form constitutes the precursor of the pore: upon cleavage, the released N-terminal moiety (Gasdermin-A3, N-terminal) binds to membranes and forms pores, triggering pyroptosis. This form acts as a sensor of infection: activation is triggered by cleavage by some bacterial effector protein, which releases the N-terminal moiety (Gasdermin-A3, N-terminal). In terms of biological role, pore-forming protein that causes membrane permeabilization and pyroptosis. Released upon cleavage by some bacterial effector protein, and binds to membrane inner leaflet lipids. Homooligomerizes within the membrane and forms pores of 10-15 nanometers (nm) of inner diameter, allowing the release of mature interleukin-1 (IL1B and IL18) and triggering pyroptosis. Binds to membrane inner leaflet lipids, including bisphosphorylated phosphatidylinositols, such as phosphatidylinositol (4,5)-bisphosphate, as well as phosphatidylinositol (3,4,5)-bisphosphate, and more weakly to monophosphorylated phosphatidylinositols. Also binds to bacterial and mitochondrial lipids, including cardiolipin, and exhibits bactericidal activity. Plays a role in the transition from catagen to telogen at the end of hair follicle morphogenesis, possibly by regulating hair follicle stem cell niche maintenance. Also required for mammary gland development. This Mus musculus (Mouse) protein is Gasdermin-A3.